We begin with the raw amino-acid sequence, 466 residues long: ATP synthase subunit beta (466 aa).

An ATP-binding site is contributed by 155–162 (GGAGVGKT).

The protein belongs to the ATPase alpha/beta chains family. In terms of assembly, F-type ATPases have 2 components, CF(1) - the catalytic core - and CF(0) - the membrane proton channel. CF(1) has five subunits: alpha(3), beta(3), gamma(1), delta(1), epsilon(1). CF(0) has three main subunits: a(1), b(2) and c(9-12). The alpha and beta chains form an alternating ring which encloses part of the gamma chain. CF(1) is attached to CF(0) by a central stalk formed by the gamma and epsilon chains, while a peripheral stalk is formed by the delta and b chains.

Its subcellular location is the cell inner membrane. It catalyses the reaction ATP + H2O + 4 H(+)(in) = ADP + phosphate + 5 H(+)(out). In terms of biological role, produces ATP from ADP in the presence of a proton gradient across the membrane. The catalytic sites are hosted primarily by the beta subunits. This is ATP synthase subunit beta from Bordetella bronchiseptica (strain ATCC BAA-588 / NCTC 13252 / RB50) (Alcaligenes bronchisepticus).